Consider the following 330-residue polypeptide: Phenylalanine--tRNA ligase alpha subunit (330 aa).

Glu-255 lines the Mg(2+) pocket.

It belongs to the class-II aminoacyl-tRNA synthetase family. Phe-tRNA synthetase alpha subunit type 1 subfamily. In terms of assembly, tetramer of two alpha and two beta subunits. Requires Mg(2+) as cofactor.

It is found in the cytoplasm. The catalysed reaction is tRNA(Phe) + L-phenylalanine + ATP = L-phenylalanyl-tRNA(Phe) + AMP + diphosphate + H(+). This chain is Phenylalanine--tRNA ligase alpha subunit, found in Acinetobacter baylyi (strain ATCC 33305 / BD413 / ADP1).